Consider the following 166-residue polypeptide: Putative esterase sll0410 (166 aa).

Residue Asp-45 is part of the active site.

Belongs to the 4-hydroxybenzoyl-CoA thioesterase family.

The polypeptide is Putative esterase sll0410 (Synechocystis sp. (strain ATCC 27184 / PCC 6803 / Kazusa)).